A 1358-amino-acid chain; its full sequence is DNA-directed RNA polymerase subunit beta (1358 aa).

It belongs to the RNA polymerase beta chain family. The RNAP catalytic core consists of 2 alpha, 1 beta, 1 beta' and 1 omega subunit. When a sigma factor is associated with the core the holoenzyme is formed, which can initiate transcription.

It carries out the reaction RNA(n) + a ribonucleoside 5'-triphosphate = RNA(n+1) + diphosphate. DNA-dependent RNA polymerase catalyzes the transcription of DNA into RNA using the four ribonucleoside triphosphates as substrates. The sequence is that of DNA-directed RNA polymerase subunit beta from Thioalkalivibrio sulfidiphilus (strain HL-EbGR7).